We begin with the raw amino-acid sequence, 698 residues long: Cytochrome c oxidase subunit 1 (698 aa).

Residues Ile65–Ile85 traverse the membrane as a helical segment. Glu88 is a binding site for Ca(2+). His111 is a binding site for Fe(II)-heme a. Helical transmembrane passes span Leu113–Ile133, Leu147–Phe167, Ile304–Leu324, Ile349–Met369, Leu395–Ile415, Ile434–Leu454, Ile468–Val488, and Phe498–Leu518. His401 contributes to the Cu cation binding site. The segment at residues His401–Tyr405 is a cross-link (1'-histidyl-3'-tyrosine (His-Tyr)). Tyr405 contacts O2. Residues His450 and His451 each contribute to the Cu cation site. Residues His528 and Asp529 each contribute to the Mg(2+) site. The next 3 helical transmembrane spans lie at Val533 to Phe553, Leu574 to Ser594, and Met613 to Phe633. His536 lines the heme a3 pocket. His538 is a Fe(II)-heme a binding site.

It belongs to the heme-copper respiratory oxidase family. Component of the cytochrome c oxidase (complex IV, CIV), a multisubunit enzyme composed of a catalytic core of 3 subunits and several supernumerary subunits. The complex exists as a monomer or a dimer and forms supercomplexes (SCs) in the inner mitochondrial membrane with ubiquinol-cytochrome c oxidoreductase (cytochrome b-c1 complex, complex III, CIII). Heme serves as cofactor. The cofactor is Cu cation.

The protein localises to the mitochondrion inner membrane. The enzyme catalyses 4 Fe(II)-[cytochrome c] + O2 + 8 H(+)(in) = 4 Fe(III)-[cytochrome c] + 2 H2O + 4 H(+)(out). It participates in energy metabolism; oxidative phosphorylation. In terms of biological role, component of the cytochrome c oxidase, the last enzyme in the mitochondrial electron transport chain which drives oxidative phosphorylation. The respiratory chain contains 3 multisubunit complexes succinate dehydrogenase (complex II, CII), ubiquinol-cytochrome c oxidoreductase (cytochrome b-c1 complex, complex III, CIII) and cytochrome c oxidase (complex IV, CIV), that cooperate to transfer electrons derived from NADH and succinate to molecular oxygen, creating an electrochemical gradient over the inner membrane that drives transmembrane transport and the ATP synthase. Cytochrome c oxidase is the component of the respiratory chain that catalyzes the reduction of oxygen to water. Electrons originating from reduced cytochrome c in the intermembrane space (IMS) are transferred via the dinuclear copper A center (CU(A)) of subunit 2 and heme A of subunit 1 to the active site in subunit 1, a binuclear center (BNC) formed by heme A3 and copper B (CU(B)). The BNC reduces molecular oxygen to 2 water molecules using 4 electrons from cytochrome c in the IMS and 4 protons from the mitochondrial matrix. The protein is Cytochrome c oxidase subunit 1 (COI) of Tetrahymena pyriformis.